The following is a 497-amino-acid chain: Aluminum-activated malate transporter 10 (497 aa).

6 helical membrane-spanning segments follow: residues 66-86 (KVVH…FYYM), 88-108 (PLYD…VVVF), 123-143 (VVAT…ATQS), 148-168 (VFVI…SRFV), 173-193 (ARFD…SVGG), and 210-230 (IAIG…IWAG). 2 disordered regions span residues 413–437 (PIET…ERTT) and 476–497 (DFEQ…PLSS). Positions 417–436 (NKPEEVPSEEENKVDSEERT) are enriched in basic and acidic residues. Over residues 487–497 (DNNTKQPPLSS) the composition is skewed to polar residues.

This sequence belongs to the aromatic acid exporter (TC 2.A.85) family.

Its subcellular location is the membrane. In terms of biological role, malate transporter. This Arabidopsis thaliana (Mouse-ear cress) protein is Aluminum-activated malate transporter 10 (ALMT10).